The sequence spans 193 residues: Crossover junction endodeoxyribonuclease RuvC (193 aa).

Active-site residues include aspartate 7, glutamate 68, and aspartate 141. Aspartate 7, glutamate 68, and aspartate 141 together coordinate Mg(2+).

Belongs to the RuvC family. As to quaternary structure, homodimer which binds Holliday junction (HJ) DNA. The HJ becomes 2-fold symmetrical on binding to RuvC with unstacked arms; it has a different conformation from HJ DNA in complex with RuvA. In the full resolvosome a probable DNA-RuvA(4)-RuvB(12)-RuvC(2) complex forms which resolves the HJ. Mg(2+) serves as cofactor.

It is found in the cytoplasm. The catalysed reaction is Endonucleolytic cleavage at a junction such as a reciprocal single-stranded crossover between two homologous DNA duplexes (Holliday junction).. The RuvA-RuvB-RuvC complex processes Holliday junction (HJ) DNA during genetic recombination and DNA repair. Endonuclease that resolves HJ intermediates. Cleaves cruciform DNA by making single-stranded nicks across the HJ at symmetrical positions within the homologous arms, yielding a 5'-phosphate and a 3'-hydroxyl group; requires a central core of homology in the junction. The consensus cleavage sequence is 5'-(A/T)TT(C/G)-3'. Cleavage occurs on the 3'-side of the TT dinucleotide at the point of strand exchange. HJ branch migration catalyzed by RuvA-RuvB allows RuvC to scan DNA until it finds its consensus sequence, where it cleaves and resolves the cruciform DNA. The chain is Crossover junction endodeoxyribonuclease RuvC from Renibacterium salmoninarum (strain ATCC 33209 / DSM 20767 / JCM 11484 / NBRC 15589 / NCIMB 2235).